The chain runs to 511 residues: Probable endopeptidase p60 (511 aa).

A signal peptide spans 1-27 (MNMKKATIVSAAGIAVTAFAAPSVVSA). One can recognise a LysM 1 domain in the interval 28 to 71 (NTVVVASGDTLWGIASKTGTTVDQLKQLNKLDSDRIVPGQKLTI). The SH3b domain maps to 78–142 (KVEKSVSATW…VNGKYLSDAK (65 aa)). Residues 175-218 (STYKVKSGDTIWALSVKYGVPVQKLIEWNNLSSSSIYVGQTIAV) form the LysM 2 domain. 2 stretches are compositionally biased toward low complexity: residues 229 to 257 (TVKQAAPAKVAPKQEVKQTAPAKQEQAKP) and 264 to 282 (KPAVSKPKAATPAPTAKPA). The disordered stretch occupies residues 229-291 (TVKQAAPAKV…AVEQKASTPA (63 aa)). Residues 297-341 (ATYKVQNGDSLGKIASLFKVSVADLTNWNNLNATITIYAGQELSV) enclose the LysM 3 domain. Composition is skewed to low complexity over residues 347–362 (KPKPAAPAKPAVSKPA) and 372–390 (TNTTNNSTPTTNVNNNTSQ). The segment at 347–390 (KPKPAAPAKPAVSKPATSTPAKVTPTNTTNNSTPTTNVNNNTSQ) is disordered. The 119-residue stretch at 393–511 (SASFSALYAE…GQYLVGFGRV (119 aa)) folds into the NlpC/P60 domain. Cysteine 423 functions as the Nucleophile in the catalytic mechanism. The active-site Proton acceptor is histidine 473. The active site involves aspartate 485.

The protein belongs to the peptidase C40 family.

In terms of biological role, this major extracellular protein may be involved in the invasion of non-professional phagocytic cells by Listeria. This Listeria grayi (Listeria murrayi) protein is Probable endopeptidase p60 (iap).